We begin with the raw amino-acid sequence, 124 residues long: Small ribosomal subunit protein uS12 (124 aa).

Asp89 carries the post-translational modification 3-methylthioaspartic acid. Positions 105-124 (QGVKNRKQARSRYGAKKEKS) are disordered. Positions 108–118 (KNRKQARSRYG) are enriched in basic residues.

Belongs to the universal ribosomal protein uS12 family. In terms of assembly, part of the 30S ribosomal subunit. Contacts proteins S8 and S17. May interact with IF1 in the 30S initiation complex.

Its function is as follows. With S4 and S5 plays an important role in translational accuracy. Interacts with and stabilizes bases of the 16S rRNA that are involved in tRNA selection in the A site and with the mRNA backbone. Located at the interface of the 30S and 50S subunits, it traverses the body of the 30S subunit contacting proteins on the other side and probably holding the rRNA structure together. The combined cluster of proteins S8, S12 and S17 appears to hold together the shoulder and platform of the 30S subunit. The polypeptide is Small ribosomal subunit protein uS12 (Mycobacterium sp. (strain JLS)).